A 149-amino-acid polypeptide reads, in one-letter code: D-aminoacyl-tRNA deacylase (149 aa).

Positions 137–138 match the Gly-cisPro motif, important for rejection of L-amino acids motif; sequence GP.

The protein belongs to the DTD family. Homodimer.

It localises to the cytoplasm. The enzyme catalyses glycyl-tRNA(Ala) + H2O = tRNA(Ala) + glycine + H(+). It carries out the reaction a D-aminoacyl-tRNA + H2O = a tRNA + a D-alpha-amino acid + H(+). In terms of biological role, an aminoacyl-tRNA editing enzyme that deacylates mischarged D-aminoacyl-tRNAs. Also deacylates mischarged glycyl-tRNA(Ala), protecting cells against glycine mischarging by AlaRS. Acts via tRNA-based rather than protein-based catalysis; rejects L-amino acids rather than detecting D-amino acids in the active site. By recycling D-aminoacyl-tRNA to D-amino acids and free tRNA molecules, this enzyme counteracts the toxicity associated with the formation of D-aminoacyl-tRNA entities in vivo and helps enforce protein L-homochirality. This is D-aminoacyl-tRNA deacylase from Pediococcus pentosaceus (strain ATCC 25745 / CCUG 21536 / LMG 10740 / 183-1w).